We begin with the raw amino-acid sequence, 110 residues long: Large ribosomal subunit protein uL22 (110 aa).

It belongs to the universal ribosomal protein uL22 family. In terms of assembly, part of the 50S ribosomal subunit.

In terms of biological role, this protein binds specifically to 23S rRNA; its binding is stimulated by other ribosomal proteins, e.g. L4, L17, and L20. It is important during the early stages of 50S assembly. It makes multiple contacts with different domains of the 23S rRNA in the assembled 50S subunit and ribosome. The globular domain of the protein is located near the polypeptide exit tunnel on the outside of the subunit, while an extended beta-hairpin is found that lines the wall of the exit tunnel in the center of the 70S ribosome. The protein is Large ribosomal subunit protein uL22 of Alkaliphilus oremlandii (strain OhILAs) (Clostridium oremlandii (strain OhILAs)).